The following is a 127-amino-acid chain: Glycine cleavage system H protein (127 aa).

Residues 22–104 (KVRIGITDFA…YEKAWMIVVE (83 aa)) enclose the Lipoyl-binding domain. K63 is modified (N6-lipoyllysine).

Belongs to the GcvH family. In terms of assembly, the glycine cleavage system is composed of four proteins: P, T, L and H. (R)-lipoate is required as a cofactor.

Functionally, the glycine cleavage system catalyzes the degradation of glycine. The H protein shuttles the methylamine group of glycine from the P protein to the T protein. Its function is as follows. Is also involved in protein lipoylation via its role as an octanoyl/lipoyl carrier protein intermediate. The polypeptide is Glycine cleavage system H protein (Geobacillus sp. (strain WCH70)).